Reading from the N-terminus, the 309-residue chain is Small ribosomal subunit protein uS7m (309 aa).

The interval 39–86 (DSTTSSRLPPRVQIQQQQQQRTQPYSTETTPPPNSNNGDLAGIEGQPP) is disordered. Positions 51–61 (QIQQQQQQRTQ) are enriched in low complexity.

Belongs to the universal ribosomal protein uS7 family. Component of the mitochondrial small ribosomal subunit (mt-SSU). Mature N.crassa 74S mitochondrial ribosomes consist of a small (37S) and a large (54S) subunit. The 37S small subunit contains a 16S ribosomal RNA (16S mt-rRNA) and 32 different proteins. The 54S large subunit contains a 23S rRNA (23S mt-rRNA) and 42 different proteins.

Its subcellular location is the mitochondrion. Component of the mitochondrial ribosome (mitoribosome), a dedicated translation machinery responsible for the synthesis of mitochondrial genome-encoded proteins, including at least some of the essential transmembrane subunits of the mitochondrial respiratory chain. The mitoribosomes are attached to the mitochondrial inner membrane and translation products are cotranslationally integrated into the membrane. The sequence is that of Small ribosomal subunit protein uS7m (rsm7) from Neurospora crassa (strain ATCC 24698 / 74-OR23-1A / CBS 708.71 / DSM 1257 / FGSC 987).